Reading from the N-terminus, the 293-residue chain is 2-pyrone-4,6-dicarboxylate hydrolase (293 aa).

The segment at 1-20 (MTNDERILSWNETPSKPRYT) is disordered. Substrate-binding positions include 29–31 (HCH), tyrosine 47, serine 75, arginine 122, arginine 128, tyrosine 154, and histidine 178. The Proton acceptor role is filled by aspartate 246. A substrate-binding site is contributed by asparagine 251.

It belongs to the metallo-dependent hydrolases superfamily. PDC hydrolase family. Monomer.

The enzyme catalyses 2-oxo-2H-pyran-4,6-dicarboxylate + H2O = (1E)-4-oxobut-1-ene-1,2,4-tricarboxylate + H(+). It functions in the pathway secondary metabolite metabolism; lignin degradation. Strongly inhibited by 1 mM Zn(2+) ions. Also inhibited by pyridine-2,4-dicarboxylic acid, 5-hydroxyisophthalic acid and 5,5'-dithiobis(2-nitrobenzoic acid) (Ellman reagent). Functionally, contributes to the degradation of lignin at the level of the protocatechuate 4,5-cleavage pathway. Catalyzes the hydrolysis of 2-pyrone-4,6-dicarboxylate (PDC) to (4E)-oxalomesaconate (OMA). The keto form of OMA can tautomerize into the enol form, 4-carboxy-2-hydroxymuconate (CHM), under certain pH conditions. Also catalyzes the reverse reaction. Is essential for the growth of Sphingobium sp. SYK-6 on vanillate but is not responsible for the growth of this strain on syringate. This is 2-pyrone-4,6-dicarboxylate hydrolase from Sphingobium sp. (strain NBRC 103272 / SYK-6).